The following is a 128-amino-acid chain: Aspartate 1-decarboxylase (128 aa).

Ser25 serves as the catalytic Schiff-base intermediate with substrate; via pyruvic acid. Ser25 is modified (pyruvic acid (Ser)). Thr57 is a substrate binding site. Tyr58 (proton donor) is an active-site residue. 73 to 75 (GSA) contributes to the substrate binding site.

Belongs to the PanD family. Heterooctamer of four alpha and four beta subunits. The cofactor is pyruvate. Post-translationally, is synthesized initially as an inactive proenzyme, which is activated by self-cleavage at a specific serine bond to produce a beta-subunit with a hydroxyl group at its C-terminus and an alpha-subunit with a pyruvoyl group at its N-terminus.

The protein resides in the cytoplasm. It carries out the reaction L-aspartate + H(+) = beta-alanine + CO2. The protein operates within cofactor biosynthesis; (R)-pantothenate biosynthesis; beta-alanine from L-aspartate: step 1/1. In terms of biological role, catalyzes the pyruvoyl-dependent decarboxylation of aspartate to produce beta-alanine. This Burkholderia cenocepacia (strain HI2424) protein is Aspartate 1-decarboxylase.